The primary structure comprises 146 residues: MTIKLHDLKPARGSKTPRTRVGRGEGSKGKTAGRGTKGTKARKNVPVTFEGGQMPIHMRLPKLKGFRNRFRTEYEIVNVGDINRLFPQGGSVGVDELVAKGAVRRNSLVKVLGDGKLTVKVEVSAHKFSGSAREKITAAGGSVTEL.

The span at 1–10 (MTIKLHDLKP) shows a compositional bias: basic and acidic residues. Positions 1–52 (MTIKLHDLKPARGSKTPRTRVGRGEGSKGKTAGRGTKGTKARKNVPVTFEGG) are disordered.

Belongs to the universal ribosomal protein uL15 family. As to quaternary structure, part of the 50S ribosomal subunit.

In terms of biological role, binds to the 23S rRNA. The protein is Large ribosomal subunit protein uL15 of Mycolicibacterium paratuberculosis (strain ATCC BAA-968 / K-10) (Mycobacterium paratuberculosis).